The following is a 764-amino-acid chain: MKEENGFAGFLNTAVNRLSGVLNDTAPTKSQSLKNGVNNEGNRGFSLFRNPRFMSDEKLSSEASSHSTLGQQQARDGRQSPSKEAPFGEGELKLENFENQENEADEAENEETSYSEQNHTENTEEIAEESRPLERTHSGSNHHEASSTGHLNLPPLENTLSQGSAITAPSRKVSITSSNGVSARLSGYAFANSKRNRDFHRIFKVLPPEDHLIDDYGCALQRDIFLHGRMYLSESHICFNSSIFGWVTNIVIPVTEIVSVEKKSTAVVFPNAIQITTLHARYIFASFISRDTTYQLIIAIWKNTHPFLTTLANGHGVMDASGNHHSGSSNQSINADSSAGSEGVDEGTSTEANDESSEDDDEDNNTDEANEDAQSNVSDESPKGEGSSHSDNVVLSDGNSVKKMNEDGADTSLLSVSEVTSHPPTEWTGSPLAHVLCSDVVNLSVSTVFNLLCGSDTTWIINFFKSEKLTEIKIGKWEKIDDKWNRKVQYIKPVAPPYRQTSCYITDTIQHLDINNYIEILSTTSTPDVPSGTSFVVKTLYALSWAHSSKTKLNISYSVEWSKSSWLKGPIEKGAQEGQASYVKDLLTAFENYKVSPKGRRKKITKHTKKKNKHASETSVAPEKVDNSSIEQSSSFLTKLYTFPFTIITWLMHPTHLLLVVMFSMLVLQWWYMQQILHAELPSTSSRSDSSRDLDFDHIPMDDTAFKLWITSRLDSVERDRDFVYENSDPNLEHGKIKIATDYMERRLKKLKERLRKLEASGYI.

Residues 1 to 646 (MKEENGFAGF…LTKLYTFPFT (646 aa)) lie on the Lumenal side of the membrane. The tract at residues 22–173 (LNDTAPTKSQ…SAITAPSRKV (152 aa)) is disordered. Residue N23 is glycosylated (N-linked (GlcNAc...) asparagine). Composition is skewed to polar residues over residues 25-41 (TAPTKSQSLKNGVNNEG) and 61-82 (SEASSHSTLGQQQARDGRQSPS). S80 bears the Phosphoserine mark. Positions 98 to 113 (ENQENEADEAENEETS) are enriched in acidic residues. Residue N118 is glycosylated (N-linked (GlcNAc...) asparagine). Basic and acidic residues predominate over residues 118–145 (NHTENTEEIAEESRPLERTHSGSNHHEA). Polar residues predominate over residues 158–173 (NTLSQGSAITAPSRKV). The GRAM domain maps to 197 to 264 (RDFHRIFKVL…TEIVSVEKKS (68 aa)). Residues N240 and N330 are each glycosylated (N-linked (GlcNAc...) asparagine). Residues 320-406 (ASGNHHSGSS…DGNSVKKMNE (87 aa)) are disordered. Over residues 321–330 (SGNHHSGSSN) the composition is skewed to low complexity. A compositionally biased stretch (polar residues) spans 331-340 (QSINADSSAG). The span at 352 to 371 (ANDESSEDDDEDNNTDEANE) shows a compositional bias: acidic residues. N-linked (GlcNAc...) asparagine glycosylation is found at N364 and N376. Over residues 389–399 (HSDNVVLSDGN) the composition is skewed to polar residues. The region spanning 432–598 (LAHVLCSDVV…AFENYKVSPK (167 aa)) is the VASt domain. N442 and N554 each carry an N-linked (GlcNAc...) asparagine glycan. The segment covering 598–613 (KGRRKKITKHTKKKNK) has biased composition (basic residues). The disordered stretch occupies residues 598–626 (KGRRKKITKHTKKKNKHASETSVAPEKVD). N627 carries N-linked (GlcNAc...) asparagine glycosylation. The helical transmembrane segment at 647 to 667 (IITWLMHPTHLLLVVMFSMLV) threads the bilayer. Over 668–764 (LQWWYMQQIL…LRKLEASGYI (97 aa)) the chain is Cytoplasmic.

It belongs to the YSP2 family.

The protein resides in the membrane. This is an uncharacterized protein from Schizosaccharomyces pombe (strain 972 / ATCC 24843) (Fission yeast).